Reading from the N-terminus, the 68-residue chain is ATP synthase subunit c (68 aa).

A run of 2 helical transmembrane segments spans residues 4-24 (IAAAIAIGLSALGAGIGNGLI) and 45-65 (IMFIGIGLVEALPIIGVVIAF).

This sequence belongs to the ATPase C chain family. As to quaternary structure, F-type ATPases have 2 components, F(1) - the catalytic core - and F(0) - the membrane proton channel. F(1) has five subunits: alpha(3), beta(3), gamma(1), delta(1), epsilon(1). F(0) has three main subunits: a(1), b(2) and c(10-14). The alpha and beta chains form an alternating ring which encloses part of the gamma chain. F(1) is attached to F(0) by a central stalk formed by the gamma and epsilon chains, while a peripheral stalk is formed by the delta and b chains.

Its subcellular location is the cell membrane. Functionally, f(1)F(0) ATP synthase produces ATP from ADP in the presence of a proton or sodium gradient. F-type ATPases consist of two structural domains, F(1) containing the extramembraneous catalytic core and F(0) containing the membrane proton channel, linked together by a central stalk and a peripheral stalk. During catalysis, ATP synthesis in the catalytic domain of F(1) is coupled via a rotary mechanism of the central stalk subunits to proton translocation. Key component of the F(0) channel; it plays a direct role in translocation across the membrane. A homomeric c-ring of between 10-14 subunits forms the central stalk rotor element with the F(1) delta and epsilon subunits. This chain is ATP synthase subunit c, found in Staphylococcus saprophyticus subsp. saprophyticus (strain ATCC 15305 / DSM 20229 / NCIMB 8711 / NCTC 7292 / S-41).